Reading from the N-terminus, the 226-residue chain is Holliday junction branch migration complex subunit RuvA (226 aa).

The segment at 1–67 (MITSVYAKIE…AINKELYAFK (67 aa)) is domain I. Residues 68 to 145 (SLKEKEWFKA…YLKNQIVVSD (78 aa)) are domain II. The interval 146-167 (KVEPQIDDDEKIDDSKDLNDDE) is flexible linker. The interval 168-226 (LLSEIVIEAIDCLISLGYKQEQIKTALAEIDLKNESINDSADLVAVIIKQIGLRTSEVS) is domain III.

Belongs to the RuvA family. In terms of assembly, homotetramer. Forms an RuvA(8)-RuvB(12)-Holliday junction (HJ) complex. HJ DNA is sandwiched between 2 RuvA tetramers; dsDNA enters through RuvA and exits via RuvB. An RuvB hexamer assembles on each DNA strand where it exits the tetramer. Each RuvB hexamer is contacted by two RuvA subunits (via domain III) on 2 adjacent RuvB subunits; this complex drives branch migration. In the full resolvosome a probable DNA-RuvA(4)-RuvB(12)-RuvC(2) complex forms which resolves the HJ.

The protein localises to the cytoplasm. Functionally, the RuvA-RuvB-RuvC complex processes Holliday junction (HJ) DNA during genetic recombination and DNA repair, while the RuvA-RuvB complex plays an important role in the rescue of blocked DNA replication forks via replication fork reversal (RFR). RuvA specifically binds to HJ cruciform DNA, conferring on it an open structure. The RuvB hexamer acts as an ATP-dependent pump, pulling dsDNA into and through the RuvAB complex. HJ branch migration allows RuvC to scan DNA until it finds its consensus sequence, where it cleaves and resolves the cruciform DNA. This chain is Holliday junction branch migration complex subunit RuvA, found in Mycoplasmoides gallisepticum (strain R(low / passage 15 / clone 2)) (Mycoplasma gallisepticum).